The primary structure comprises 159 residues: Protein-export protein SecB (159 aa).

The protein belongs to the SecB family. Homotetramer, a dimer of dimers. One homotetramer interacts with 1 SecA dimer.

It localises to the cytoplasm. Functionally, one of the proteins required for the normal export of preproteins out of the cell cytoplasm. It is a molecular chaperone that binds to a subset of precursor proteins, maintaining them in a translocation-competent state. It also specifically binds to its receptor SecA. This is Protein-export protein SecB from Burkholderia vietnamiensis (strain G4 / LMG 22486) (Burkholderia cepacia (strain R1808)).